Reading from the N-terminus, the 285-residue chain is Integrin alpha-1 (285 aa).

Residues 1-285 (ENMTFGTTLV…HYSQDWVMLG (285 aa)) are Extracellular-facing. Asparagine 2, asparagine 40, asparagine 208, and asparagine 232 each carry an N-linked (GlcNAc...) asparagine glycan. A VWFA domain is found at 66 to 279 (IVLDGSNSIY…QAGFSAHYSQ (214 aa)).

This sequence belongs to the integrin alpha chain family. Heterodimer of an alpha and a beta subunit. Alpha-1 associates with beta-1.

It is found in the membrane. Its function is as follows. Integrin alpha-1/beta-1 is a receptor for laminin and collagen. It recognizes the proline-hydroxylated sequence G-F-P-G-E-R in collagen. Involved in anchorage-dependent, negative regulation of EGF-stimulated cell growth. This chain is Integrin alpha-1 (ITGA1), found in Gallus gallus (Chicken).